We begin with the raw amino-acid sequence, 264 residues long: Phosphatidylglycerol--prolipoprotein diacylglyceryl transferase (264 aa).

Helical transmembrane passes span 14–34 (VGPL…LLFM), 57–77 (LLLY…VLFF), 89–109 (ILAI…VLVA), 127–147 (FIAP…FING), 176–196 (QLYQ…VYSA), 202–222 (KAVS…AEFF), and 235–255 (LGLS…VGLL). R140 is a binding site for a 1,2-diacyl-sn-glycero-3-phospho-(1'-sn-glycerol).

It belongs to the Lgt family.

The protein localises to the cell inner membrane. The catalysed reaction is L-cysteinyl-[prolipoprotein] + a 1,2-diacyl-sn-glycero-3-phospho-(1'-sn-glycerol) = an S-1,2-diacyl-sn-glyceryl-L-cysteinyl-[prolipoprotein] + sn-glycerol 1-phosphate + H(+). The protein operates within protein modification; lipoprotein biosynthesis (diacylglyceryl transfer). Catalyzes the transfer of the diacylglyceryl group from phosphatidylglycerol to the sulfhydryl group of the N-terminal cysteine of a prolipoprotein, the first step in the formation of mature lipoproteins. The protein is Phosphatidylglycerol--prolipoprotein diacylglyceryl transferase of Aromatoleum aromaticum (strain DSM 19018 / LMG 30748 / EbN1) (Azoarcus sp. (strain EbN1)).